A 165-amino-acid chain; its full sequence is Cell division protein SepF (165 aa).

Residues 23–75 (DEYGDYAGDYETQETAPVATRSSKRESRPAPVSDLSERRRPASGPTGVVAELS) form a disordered region.

This sequence belongs to the SepF family. As to quaternary structure, homodimer. Interacts with FtsZ.

It is found in the cytoplasm. Functionally, cell division protein that is part of the divisome complex and is recruited early to the Z-ring. Probably stimulates Z-ring formation, perhaps through the cross-linking of FtsZ protofilaments. Its function overlaps with FtsA. This chain is Cell division protein SepF, found in Nocardioides sp. (strain ATCC BAA-499 / JS614).